Reading from the N-terminus, the 356-residue chain is MASLTAALATPAAAALLLLVLLAAPASAANFTCAVASGTTCKSAILYTSPNATTYGNLVARFNTTTLPDLLGANGLPDGTLSSAPVAANSTVKIPFRCRCNGDVGQSDRLPIYVVQPQDGLDAIARNVFNAFVTYQEIAAANNIPDPNKINVSQTLWIPLPCSCDKEEGSNVMHLAYSVGKGENTSAIAAKYGVTESTLLTRNKIDDPTKLQMGQILDVPLPVCRSSISDTSADHNLMLLPDGTYGFTAGNCIRCSCSSTTYQLNCTAVQNKGCPSVPLCNGTLKLGETNGTGCGSTTCAYSGYSNSSSLIIQTSLATNQTTACQRGGSGRSQFARSMWSMSVISFHMVLIIICFL.

An N-terminal signal peptide occupies residues Met-1–Ala-28. Asn-30 is a glycosylation site (N-linked (GlcNAc...) asparagine). 4 disulfides stabilise this stretch: Cys-33–Cys-100, Cys-41–Cys-164, Cys-98–Cys-162, and Cys-100–Cys-164. Position 50–51 (Pro-50–Asn-51) interacts with chitin. N-linked (GlcNAc...) asparagine glycans are attached at residues Asn-63 and Asn-89. LysM domains follow at residues Pro-111–Ile-158 and Leu-175–Val-219. Chitin is bound by residues Pro-117–Ala-123, Asn-142, Pro-145–Val-152, Thr-155, and Gly-182. An N-linked (GlcNAc...) asparagine glycan is attached at Asn-151. The N-linked (GlcNAc...) asparagine glycan is linked to Asn-184. Chitin contacts are provided by residues Ser-186 and Leu-211–Met-213. 2 cysteine pairs are disulfide-bonded: Cys-224-Cys-257 and Cys-252-Cys-274. 5 N-linked (GlcNAc...) asparagine glycosylation sites follow: Asn-265, Asn-281, Asn-290, Asn-306, and Asn-319. The helical transmembrane segment at Arg-336–Leu-356 threads the bilayer.

As to quaternary structure, forms homooligomer. Interacts with CERK1. Binds to chitin oligosaccharide elicitor. Interacts with LYP4 and LYP6. In terms of processing, N-glycosylated. Expressed in seedlings, roots, shoots, stems and flowers.

The protein resides in the cell membrane. In terms of biological role, chitin elicitor-binding protein involved in the perception and transduction of chitin oligosaccharide elicitor signal for defense responses. This Oryza sativa subsp. japonica (Rice) protein is Chitin elicitor-binding protein.